The sequence spans 75 residues: Large ribosomal subunit protein bL31 (75 aa).

This sequence belongs to the bacterial ribosomal protein bL31 family. Type A subfamily. Part of the 50S ribosomal subunit.

In terms of biological role, binds the 23S rRNA. The sequence is that of Large ribosomal subunit protein bL31 from Nitrobacter winogradskyi (strain ATCC 25391 / DSM 10237 / CIP 104748 / NCIMB 11846 / Nb-255).